Here is a 344-residue protein sequence, read N- to C-terminus: GPALPP motifs-containing protein 1 (344 aa).

The interval M1–K309 is disordered. A2 is modified (N-acetylalanine). Residues G7 to P12 carry the GPALPP motif 1 motif. Residue S28 is modified to Phosphoserine. Residues G30–P35 carry the GPALPP motif 2 motif. Composition is skewed to acidic residues over residues G58 to T67 and D80 to G93. A GPALPP motif 3 motif is present at residues G96–P101. S109 is subject to Phosphoserine. The span at P111 to P120 shows a compositional bias: pro residues. The short motif at G116–P121 is the GPALPP motif 4 element. Residues Q128–P137 show a composition bias toward basic and acidic residues. Residue T142 is modified to Phosphothreonine. A phosphoserine mark is found at S144 and S145. 4 stretches are compositionally biased toward basic and acidic residues: residues E167–V191, P231–A265, E273–I283, and K291–K309. K275 is covalently cross-linked (Glycyl lysine isopeptide (Lys-Gly) (interchain with G-Cter in SUMO2)). Residue K312 forms a Glycyl lysine isopeptide (Lys-Gly) (interchain with G-Cter in SUMO2) linkage.

The sequence is that of GPALPP motifs-containing protein 1 (GPALPP1) from Pongo abelii (Sumatran orangutan).